Consider the following 117-residue polypeptide: MNAPPTFESFLLYEGEKKIIKELDTKVTNAAIFTINKEDHTLGNMIRNQLLKDPNVLFAGYKVPHPLEHKFVIRIQTTADYSPQEAFMNAITDLLAELSLFEERFKDAIKEKKEGGD.

It belongs to the archaeal Rpo11/eukaryotic RPB11/RPC19 RNA polymerase subunit family. In terms of assembly, component of the RNA polymerase II (Pol II) complex consisting of 12 subunits.

The protein resides in the nucleus. In terms of biological role, DNA-dependent RNA polymerase catalyzes the transcription of DNA into RNA using the four ribonucleoside triphosphates as substrates. Component of RNA polymerase II which synthesizes mRNA precursors and many functional non-coding RNAs. Pol II is the central component of the basal RNA polymerase II transcription machinery. It is composed of mobile elements that move relative to each other. RPB11 is part of the core element with the central large cleft. The chain is DNA-directed RNA polymerase II subunit RPB11 from Drosophila melanogaster (Fruit fly).